Here is a 197-residue protein sequence, read N- to C-terminus: Recombination protein RecR (197 aa).

The C4-type zinc finger occupies 55 to 70; that stretch reads CVQCRDFTESEICTIC. One can recognise a Toprim domain in the interval 78–173; that stretch reads QQLCVVESPA…RPSRLAQGMP (96 aa).

It belongs to the RecR family.

In terms of biological role, may play a role in DNA repair. It seems to be involved in an RecBC-independent recombinational process of DNA repair. It may act with RecF and RecO. The sequence is that of Recombination protein RecR from Xanthomonas euvesicatoria pv. vesicatoria (strain 85-10) (Xanthomonas campestris pv. vesicatoria).